We begin with the raw amino-acid sequence, 255 residues long: Taurine import ATP-binding protein TauB (255 aa).

Positions 2–229 constitute an ABC transporter domain; the sequence is LQISHLYADY…RFVAGESSRS (228 aa). 34–41 serves as a coordination point for ATP; the sequence is GPSGCGKT.

It belongs to the ABC transporter superfamily. Taurine importer (TC 3.A.1.17.1) family. In terms of assembly, the complex is composed of two ATP-binding proteins (TauB), two transmembrane proteins (TauC) and a solute-binding protein (TauA).

It is found in the cell inner membrane. The enzyme catalyses taurine(out) + ATP + H2O = taurine(in) + ADP + phosphate + H(+). Functionally, part of the ABC transporter complex TauABC involved in taurine import. Responsible for energy coupling to the transport system. This is Taurine import ATP-binding protein TauB from Shigella boydii serotype 4 (strain Sb227).